Consider the following 1114-residue polypeptide: MAEAPPVSGTFKFNTDAAEFIPQERKTSGLNCGTQRRLDSSRIGRRNYSSSPPCHLPRHIPYEDISAVHQHSYASGSKPKSPQGFFQSSNKSLKNHGLQNQPWQKARNEKHQNRNKKAQGLSEQTSDTSSLESVARSESGTNPREHSPSESEKEVVIADPRGAKPKKAAQLTYNYGRGPKAKGRLRSEWGNRMSPKSEDENTRPVAISHTDSSDASCRKPVVDPCVCRRNEQRRYPQKRPPWEVEGARPRPGRNPPKQESQRHINAGPKTNMSPIPKDNLRERPTKSACDTGNLAVVSKSSRRVNQEKTAVRRQDPQVLSPFPRGKQNHMLKNVETHTGSLIEQLTTEKYECMVCCELVQVTAPVWSCQSCFHVFHLNCIKKWARSPASHADGQSGWRCPACQNVSAHVPNTYTCFCGKVKNPEWSRNEIPHSCGEVCRKKQPGQDCPHSCNLLCHPGPCPPCPAFTTKTCECGRTRHTVRCGQPVSVHCSNACENILNCGQHHCAELCHGGQCQPCRIILNQVCYCGSTSRDVLCGTDVGKSDGFGDFSCLKICGKDLKCGSHTCSQVCHPQPCQPCPRLPHLVRYCPCGQTPLSQLLEHGSNARKTCMDPVPSCGKVCGKPLACGSSDFIHTCEKLCHEGDCGPCSRTSVISCRCSFRTKELPCTSLKSEDATFMCDKRCNKKRLCGRHKCNEICCVDKEHKCPLICGRKLRCGLHRCEEPCHRGNCQTCWQASFDELTCHCGASVIYPPVPCGTRPPECTQTCARIHECDHPVYHSCHSEEKCPPCTFLTQKWCMGKHELRSNIPCHLVDISCGLPCSAMLPCGMHKCQRLCHKGECLVDEACKQPCTTPRGDCGHPCMAPCHPSLPCPVTACKAKVELQCECGRRKEMVICSEASGTYQRIVAISMASKITDMQLGDSVEISKLITKKEVQQARLQCDEECAALERRKRLAEAFDITDDSDPFNVRSSASKFSDSLKDDARKDLKFVSDVEKEMETLVEAVNKGKNNKKSHCFPPMNRDHRRIIHDLAQVYGLESISYDSEPKRNVVVTAVRGKSVCPPTTLTSVIERETQTRPPPPIPHHRHQADKAPGSSTLQKIVKEAVIDYFDVQD.

The interval 9-26 (GTFKFNTDAAEFIPQERK) is interaction with PABPC1 and PABC4. 3 disordered regions span residues 20-220 (FIPQ…CRKP), 232-287 (QRRY…PTKS), and 299-325 (KSSR…FPRG). Residues serine 50, serine 81, serine 92, serine 126, serine 130, and serine 147 each carry the phosphoserine modification. 2 stretches are compositionally biased toward polar residues: residues 72 to 103 (SYAS…NQPW) and 121 to 142 (LSEQ…SGTN). Basic and acidic residues-rich tracts occupy residues 143–156 (PREH…KEVV), 185–202 (LRSE…DENT), 232–248 (QRRY…EGAR), and 304–315 (VNQEKTAVRRQD). Serine 320 carries the phosphoserine modification. Residues 352–403 (CMVCCELVQVTAPVWSCQSCFHVFHLNCIKKWARSPASHADGQSGWRCPACQ) form an RING-type; atypical zinc finger. 8 NF-X1-type zinc fingers span residues 447–465 (CPHS…PCPA), 500–519 (CGQH…PCRI), 561–580 (CGSH…PCPR), 626–649 (CGSS…PCSR), 688–707 (CGRH…KCPL), 715–734 (CGLH…TCWQ), 826–848 (CGMH…ACKQ), and 857–878 (CGHP…ACKA). Residues 988–1056 (LKFVSDVEKE…KRNVVVTAVR (69 aa)) enclose the R3H domain. Residues 1071-1095 (ERETQTRPPPPIPHHRHQADKAPGS) form a disordered region.

It belongs to the NFX1 family. As to quaternary structure, interacts with PABPC1 and PABPC4. Ubiquitously expressed, with highest levels in thymus.

It is found in the nucleus. Its function is as follows. Binds to the X-box motif of MHC class II genes and represses their expression. May play an important role in regulating the duration of an inflammatory response by limiting the period in which MHC class II molecules are induced by interferon-gamma. Together with PABPC1 or PABPC4, acts as a coactivator for TERT expression. Mediates E2-dependent ubiquitination. The polypeptide is Transcriptional repressor NF-X1 (Nfx1) (Mus musculus (Mouse)).